A 465-amino-acid chain; its full sequence is Cysteine--tRNA ligase (465 aa).

Zn(2+) is bound at residue Cys29. A 'HIGH' region motif is present at residues 31–41 (PTVYNYIHIGN). Zn(2+) contacts are provided by Cys209, His234, and Glu238. A 'KMSKS' region motif is present at residues 266–270 (KMSKS). Lys269 lines the ATP pocket. Residue Ser270 is modified to Phosphoserine.

This sequence belongs to the class-I aminoacyl-tRNA synthetase family. As to quaternary structure, monomer. The cofactor is Zn(2+).

It localises to the cytoplasm. The catalysed reaction is tRNA(Cys) + L-cysteine + ATP = L-cysteinyl-tRNA(Cys) + AMP + diphosphate. In Bacillus anthracis (strain A0248), this protein is Cysteine--tRNA ligase.